A 475-amino-acid chain; its full sequence is CAAX prenyl protease 1 homolog (475 aa).

Over 1-18 (MGMWASLDALWEMPAEKR) the chain is Lumenal. Residues 19-39 (IFGAVLLFSWTVYLWETFLAQ) traverse the membrane as a helical segment. The Nuclear portion of the chain corresponds to 40-81 (RQRRIYKTTTHVPPELGQIMDSETFEKSRLYQLDKSTFSFWS). A helical transmembrane segment spans residues 82–102 (GLYSETEGTLILLFGGIPYLW). Over 103-123 (RLSGRFCGYAGFGPEYEITQS) the chain is Lumenal. Residues 124–144 (LVFLLLATLFSALTGLPWSLY) traverse the membrane as a helical segment. The Nuclear segment spans residues 145–170 (NTFVIEEKHGFNQQTLGFFMKDAIKK). The chain crosses the membrane as a helical span at residues 171–191 (FVVTQCILLPVSSLLLYIIKI). The Lumenal segment spans residues 192–195 (GGDY). Residues 196-216 (FFIYAWLFTLVVSLVLVTIYA) traverse the membrane as a helical segment. Topologically, residues 217 to 347 (DYIAPLFDKF…GHWKLGHTVK (131 aa)) are nuclear. Position 335 (H335) interacts with Zn(2+). E336 is a catalytic residue. A Zn(2+)-binding site is contributed by H339. Residues 348–368 (NIIISQMNSFLCFFLFAVLIG) traverse the membrane as a helical segment. Topologically, residues 369–382 (RKELFAAFGFYDSQ) are lumenal. Residues 383–405 (PTLIGLLIIFQFIFSPYNEVLSF) form a helical membrane-spanning segment. The Nuclear portion of the chain corresponds to 406–475 (CLTVLSRRFE…LQALKTMKQH (70 aa)). Residue E415 coordinates Zn(2+).

The protein belongs to the peptidase M48A family. The cofactor is Zn(2+). In terms of tissue distribution, widely expressed. High levels in kidney, prostate, testis and ovary.

The protein resides in the endoplasmic reticulum membrane. It localises to the nucleus inner membrane. It is found in the early endosome membrane. Its subcellular location is the late endosome membrane. The enzyme catalyses Hydrolyzes the peptide bond -P2-(S-farnesyl or geranylgeranyl)C-P1'-P2'-P3'-COOH where P1' and P2' are amino acids with aliphatic side chains and P3' is any C-terminal residue.. Transmembrane metalloprotease whose catalytic activity is critical for processing lamin A/LMNA on the inner nuclear membrane and clearing clogged translocons on the endoplasmic reticulum. Proteolytically removes the C-terminal three residues of farnesylated proteins. Also plays an antiviral role independently of its protease activity by restricting enveloped RNA and DNA viruses, including influenza A, Zika, Ebola, Sindbis, vesicular stomatitis, cowpox, and vaccinia. Mechanistically, controls IFITM antiviral pathway to hinder viruses from breaching the endosomal barrier by modulating membrane fluidity. The protein is CAAX prenyl protease 1 homolog of Homo sapiens (Human).